The following is a 639-amino-acid chain: MLLRKRYRHRPCRLQFLLLLLMLGCVLMMVAMLHPPHHTLHQTVTAQASKHSPEARYRLDFGESQDWVLEAEDEGEEYSPLEGLPPFISLREDQLLVAVALPQARRNQSQGRRGGSYRLIKQPRRQDKEAPKRDWGADEDGEVSEEEELTPFSLDPRGLQEALSARIPLQRALPEVRHPLCLQQHPQDSLPTASVILCFHDEAWSTLLRTVHSILDTVPRAFLKEIILVDDLSQQGQLKSALSEYVARLEGVKLLRSNKRLGAIRARMLGATRATGDVLVFMDAHCECHPGWLEPLLSRIAGDRSRVVSPVIDVIDWKTFQYYPSKDLQRGVLDWKLDFHWEPLPEHVRKALQSPISPIRSPVVPGEVVAMDRHYFQNTGAYDSLMSLRGGENLELSFKAWLCGGSVEILPCSRVGHIYQNQDSHSPLDQEATLRNRVRIAETWLGSFKETFYKHSPEAFSLSKAEKPDCMERLQLQRRLGCRTFHWFLANVYPELYPSEPRPSFSGKLHNTGLGLCADCQAEGDILGCPMVLAPCSDSRQQQYLQHTSRKEIHFGSPQHLCFAVRQEQVILQNCTEEGLAIHQQHWDFQENGMIVHILSGKCMEAVVQENNKDLYLRPCDGKARQQWRFDQINAVDER.

The Cytoplasmic segment spans residues 1–11 (MLLRKRYRHRP). The chain crosses the membrane as a helical; Signal-anchor for type II membrane protein span at residues 12–34 (CRLQFLLLLLMLGCVLMMVAMLH). The Lumenal segment spans residues 35–639 (PPHHTLHQTV…FDQINAVDER (605 aa)). A disordered region spans residues 106–155 (RNQSQGRRGGSYRLIKQPRRQDKEAPKRDWGADEDGEVSEEEELTPFSLD). Asn-107 carries N-linked (GlcNAc...) asparagine glycosylation. Basic and acidic residues predominate over residues 124-136 (RRQDKEAPKRDWG). Over residues 137–149 (ADEDGEVSEEEEL) the composition is skewed to acidic residues. Cystine bridges form between Cys-181–Cys-412, Cys-403–Cys-482, Cys-517–Cys-536, Cys-562–Cys-575, and Cys-603–Cys-620. Residues 190-299 (LPTASVILCF…PGWLEPLLSR (110 aa)) are catalytic subdomain A. Residues Asp-231 and Arg-260 each coordinate substrate. Residues Asp-283, His-285, and His-417 each coordinate Mn(2+). A catalytic subdomain B region spans residues 358-420 (PIRSPVVPGE…PCSRVGHIYQ (63 aa)). The Ricin B-type lectin domain occupies 504 to 631 (SFSGKLHNTG…GKARQQWRFD (128 aa)). An N-linked (GlcNAc...) asparagine glycan is attached at Asn-574.

Belongs to the glycosyltransferase 2 family. GalNAc-T subfamily. The cofactor is Mn(2+). In terms of tissue distribution, widely expressed. Highly expressed in small intestine, placenta, spleen, cerebral cortex and ovary. Expressed at intermediate level in uterus, mammary gland, stomach, cerebellum and whole brain. Weakly expressed in fetal brain, bone marrow, thyroid gland, thymus, heart, skeletal muscle, lung, liver, colon, pancreas, kidney and testis. Not expressed in leukocyte. Expressed in both normal and osteoarthritic cartilage. Expressed at low level in chondrocytes in all zones of both normal and osteoarthritic cartilage.

The protein localises to the golgi apparatus membrane. The catalysed reaction is L-seryl-[protein] + UDP-N-acetyl-alpha-D-galactosamine = a 3-O-[N-acetyl-alpha-D-galactosaminyl]-L-seryl-[protein] + UDP + H(+). It carries out the reaction L-threonyl-[protein] + UDP-N-acetyl-alpha-D-galactosamine = a 3-O-[N-acetyl-alpha-D-galactosaminyl]-L-threonyl-[protein] + UDP + H(+). It participates in protein modification; protein glycosylation. Catalyzes the initial reaction in O-linked oligosaccharide biosynthesis, the transfer of an N-acetyl-D-galactosamine residue to a serine or threonine residue on the protein receptor. Although it displays a much weaker activity toward all substrates tested compared to GALNT2, it is able to transfer up to seven GalNAc residues to the Muc5AC peptide, suggesting that it can fill vicinal Thr/Ser residues in cooperation with other GALNT proteins. Prefers Muc1a as substrate. This is Polypeptide N-acetylgalactosaminyltransferase 15 (GALNT15) from Homo sapiens (Human).